Here is a 1609-residue protein sequence, read N- to C-terminus: Probable cation-transporting ATPase I (1609 aa).

10 helical membrane passes run 30–50, 176–196, 238–258, 357–377, 641–661, 673–693, 778–798, 921–941, 969–989, and 997–1017; these read GAVN…WPVV, LAIL…SAAV, IALS…GTPL, LIAA…AGAI, VHLA…ASAG, WFSP…VSAS, ILAV…ALLV, LFEG…ATGV, TSKV…LALL, and AVAD…PLVA. The active-site 4-aspartylphosphate intermediate is Asp1053. 2 residues coordinate Mg(2+): Asp1335 and Asp1339. Helical transmembrane passes span 1396 to 1416 and 1426 to 1446; these read ILVG…VFGA and LLLV…VTSQ. The segment at 1447-1476 is disordered; that stretch reads YEEPGEDEYQTDEEADEARRTHQHEVLTGP. Residues 1449 to 1462 show a composition bias toward acidic residues; the sequence is EPGEDEYQTDEEAD. Helical transmembrane passes span 1542–1562 and 1573–1593; these read VVAT…TPVI and PIAW…SVLA.

Belongs to the cation transport ATPase (P-type) (TC 3.A.3) family.

It localises to the cell membrane. It catalyses the reaction ATP + H2O = ADP + phosphate + H(+). This chain is Probable cation-transporting ATPase I (ctpI), found in Mycobacterium leprae (strain TN).